Here is a 157-residue protein sequence, read N- to C-terminus: Cyclic pyranopterin monophosphate synthase (157 aa).

Residues 74–76 (MCH) and 110–111 (ME) each bind substrate. Asp125 is an active-site residue.

The protein belongs to the MoaC family. As to quaternary structure, homohexamer; trimer of dimers.

It carries out the reaction (8S)-3',8-cyclo-7,8-dihydroguanosine 5'-triphosphate = cyclic pyranopterin phosphate + diphosphate. The protein operates within cofactor biosynthesis; molybdopterin biosynthesis. Catalyzes the conversion of (8S)-3',8-cyclo-7,8-dihydroguanosine 5'-triphosphate to cyclic pyranopterin monophosphate (cPMP). This chain is Cyclic pyranopterin monophosphate synthase, found in Peptoclostridium acidaminophilum (Eubacterium acidaminophilum).